Consider the following 156-residue polypeptide: S-ribosylhomocysteine lyase (156 aa).

Fe cation-binding residues include His56, His60, and Cys123.

It belongs to the LuxS family. As to quaternary structure, homodimer. Requires Fe cation as cofactor.

It carries out the reaction S-(5-deoxy-D-ribos-5-yl)-L-homocysteine = (S)-4,5-dihydroxypentane-2,3-dione + L-homocysteine. Its function is as follows. Involved in the synthesis of autoinducer 2 (AI-2) which is secreted by bacteria and is used to communicate both the cell density and the metabolic potential of the environment. The regulation of gene expression in response to changes in cell density is called quorum sensing. Catalyzes the transformation of S-ribosylhomocysteine (RHC) to homocysteine (HC) and 4,5-dihydroxy-2,3-pentadione (DPD). The chain is S-ribosylhomocysteine lyase from Staphylococcus aureus (strain bovine RF122 / ET3-1).